The chain runs to 256 residues: Trans-aconitate 2-methyltransferase (256 aa).

It belongs to the methyltransferase superfamily. Tam family.

Its subcellular location is the cytoplasm. The catalysed reaction is trans-aconitate + S-adenosyl-L-methionine = (E)-3-(methoxycarbonyl)pent-2-enedioate + S-adenosyl-L-homocysteine. Catalyzes the S-adenosylmethionine monomethyl esterification of trans-aconitate. In Rhizobium rhizogenes (strain K84 / ATCC BAA-868) (Agrobacterium radiobacter), this protein is Trans-aconitate 2-methyltransferase.